We begin with the raw amino-acid sequence, 67 residues long: Large ribosomal subunit protein uL29 (67 aa).

It belongs to the universal ribosomal protein uL29 family.

In Clostridioides difficile (strain 630) (Peptoclostridium difficile), this protein is Large ribosomal subunit protein uL29.